A 261-amino-acid polypeptide reads, in one-letter code: Transmembrane and immunoglobulin domain-containing protein 1 (261 aa).

Residues M1–T26 form the signal peptide. Positions S27–T113 constitute an Ig-like C2-type 1 domain. The Extracellular portion of the chain corresponds to S27 to V215. The cysteines at positions 53 and 102 are disulfide-linked. N-linked (GlcNAc...) asparagine glycosylation is found at N57, N82, N92, N117, N157, and N189. Residues P121–D206 form the Ig-like C2-type 2 domain. A disulfide bond links C142 and C194. Residues F216–F236 traverse the membrane as a helical segment. At A237 to L261 the chain is on the cytoplasmic side.

As to quaternary structure, homodimer. N-glycosylated.

Its subcellular location is the cell membrane. The protein localises to the cytoplasm. Its function is as follows. May control cell-cell adhesion, cell migration and proliferation, cell morphology, and protects renal epithelial cells from oxidative cell injury to promote cell survival. The polypeptide is Transmembrane and immunoglobulin domain-containing protein 1 (Mus musculus (Mouse)).